We begin with the raw amino-acid sequence, 268 residues long: Ribosomal RNA small subunit methyltransferase A (268 aa).

S-adenosyl-L-methionine is bound by residues Asn11, Leu13, Gly37, Glu58, Asp86, and Asn104.

Belongs to the class I-like SAM-binding methyltransferase superfamily. rRNA adenine N(6)-methyltransferase family. RsmA subfamily.

It is found in the cytoplasm. The enzyme catalyses adenosine(1518)/adenosine(1519) in 16S rRNA + 4 S-adenosyl-L-methionine = N(6)-dimethyladenosine(1518)/N(6)-dimethyladenosine(1519) in 16S rRNA + 4 S-adenosyl-L-homocysteine + 4 H(+). Its function is as follows. Specifically dimethylates two adjacent adenosines (A1518 and A1519) in the loop of a conserved hairpin near the 3'-end of 16S rRNA in the 30S particle. May play a critical role in biogenesis of 30S subunits. In Campylobacter fetus subsp. fetus (strain 82-40), this protein is Ribosomal RNA small subunit methyltransferase A.